The following is a 105-amino-acid chain: Putative pterin-4-alpha-carbinolamine dehydratase (105 aa).

This sequence belongs to the pterin-4-alpha-carbinolamine dehydratase family.

It catalyses the reaction (4aS,6R)-4a-hydroxy-L-erythro-5,6,7,8-tetrahydrobiopterin = (6R)-L-erythro-6,7-dihydrobiopterin + H2O. This chain is Putative pterin-4-alpha-carbinolamine dehydratase, found in Sinorhizobium medicae (strain WSM419) (Ensifer medicae).